We begin with the raw amino-acid sequence, 583 residues long: Septin-9 (583 aa).

Met1 is modified (N-acetylmethionine). A compositionally biased stretch (polar residues) spans Met1 to Gly14. The segment at Met1 to Thr49 is disordered. Residue Ser30 is modified to Phosphoserine. Thr42 and Thr49 each carry phosphothreonine. Lys62 is subject to N6-acetyllysine. Residues Asp79 to Ser105 form a disordered region. Residues Ser82, Ser85, and Ser89 each carry the phosphoserine modification. Thr143 carries the phosphothreonine modification. The interval Val166 to Asp252 is disordered. The span at Leu204–Ser221 shows a compositional bias: polar residues. Tyr276 carries the post-translational modification Phosphotyrosine. In terms of domain architecture, Septin-type G spans Gln293–Glu565. The interval Gly303–Ser310 is G1 motif. Gly303–Ser310 serves as a coordination point for GTP. Phosphoserine is present on residues Ser325 and Ser330. GTP is bound by residues Thr337, Gly363, Lys443–Glu451, Gly499, and Arg514. The G3 motif stretch occupies residues Asp360–Gly363. A G4 motif region spans residues Ala442 to Asp445.

This sequence belongs to the TRAFAC class TrmE-Era-EngA-EngB-Septin-like GTPase superfamily. Septin GTPase family. In terms of assembly, septins polymerize into heterooligomeric protein complexes that form filaments, and associate with cellular membranes, actin filaments, and microtubules. GTPase activity is required for filament formation. Interacts with SEPTIN2, SEPTIN6, SEPTIN7, SEPTIN11 and SEPTIN14. Interacts with RTKN and ARHGEF18. In terms of tissue distribution, expressed in all tissues examined except muscle. Isoforms are differentially expressed in testes, kidney, liver, heart, spleen and brain.

The protein resides in the cytoplasm. The protein localises to the cytoskeleton. In terms of biological role, filament-forming cytoskeletal GTPase. May play a role in cytokinesis (Potential). The chain is Septin-9 from Mus musculus (Mouse).